We begin with the raw amino-acid sequence, 147 residues long: Myoglobin (147 aa).

The 136-residue stretch at 2 to 137 folds into the Globin domain; that stretch reads ADFEMVLKHW…VMTTIIADIE (136 aa). Histidine 60 contributes to the nitrite binding site. An O2-binding site is contributed by histidine 60. Histidine 89 lines the heme b pocket.

It belongs to the globin family. As to quaternary structure, monomeric.

The protein localises to the cytoplasm. The protein resides in the sarcoplasm. It catalyses the reaction Fe(III)-heme b-[protein] + nitric oxide + H2O = Fe(II)-heme b-[protein] + nitrite + 2 H(+). The enzyme catalyses H2O2 + AH2 = A + 2 H2O. Functionally, monomeric heme protein which primary function is to store oxygen and facilitate its diffusion within muscle tissues. Reversibly binds oxygen through a pentacoordinated heme iron and enables its timely and efficient release as needed during periods of heightened demand. Depending on the oxidative conditions of tissues and cells, and in addition to its ability to bind oxygen, it also has a nitrite reductase activity whereby it regulates the production of bioactive nitric oxide. Under stress conditions, like hypoxia and anoxia, it also protects cells against reactive oxygen species thanks to its pseudoperoxidase activity. In Makaira nigricans (Atlantic blue marlin), this protein is Myoglobin (mb).